A 434-amino-acid chain; its full sequence is MQVSVETTQGLGRRVTITVAADIIESAVKSELVNAAKKVRIDGFRKGKVPMNVVAQRYGASVRQDVLGDLMQRNFVDAIIKEKINPVGAPNYIPGEYAVGGDFTYSVEFEVYPEVELKGLDAIEVEKPVVEVTDADVDTMLETLRKQQATWKETDRAAAAEDRVTIDFTGSIDGEVFEGGKASDFVLAMGQNRMIPGFEDGVVGHKAGEEFTIDVNFPEDYHAENLKGKAAQFAIVLKKVEERELPELTEEFIKRFGVADGSQEGLRAEVRKNMERELKGAVRNRVKTQVLDGLINANEIDVPAALIDGEIDVLRRQAAQRFGGNEKQAQELPRELFEEQAKRRVVIGLLLGEVISSNELKADEARVNALIEEMASAYEDPQEVIEFYGKNKELLNNMRNVALEEQAVETVLAKAKVVEKSVSFNELMNQTATA.

The PPIase FKBP-type domain maps to 161–246 (EDRVTIDFTG…LKKVEERELP (86 aa)).

Belongs to the FKBP-type PPIase family. Tig subfamily.

It is found in the cytoplasm. It carries out the reaction [protein]-peptidylproline (omega=180) = [protein]-peptidylproline (omega=0). Involved in protein export. Acts as a chaperone by maintaining the newly synthesized protein in an open conformation. Functions as a peptidyl-prolyl cis-trans isomerase. This is Trigger factor from Pectobacterium carotovorum subsp. carotovorum (strain PC1).